Consider the following 337-residue polypeptide: Large ribosomal subunit protein uL3 (337 aa).

The tract at residues 1–26 is disordered; the sequence is MTRHHQPRKGSVAFSPRKRVARETPR.

It belongs to the universal ribosomal protein uL3 family. As to quaternary structure, part of the 50S ribosomal subunit. Forms a cluster with proteins L14 and L24e.

In terms of biological role, one of the primary rRNA binding proteins, it binds directly near the 3'-end of the 23S rRNA, where it nucleates assembly of the 50S subunit. This chain is Large ribosomal subunit protein uL3, found in Methanosphaera stadtmanae (strain ATCC 43021 / DSM 3091 / JCM 11832 / MCB-3).